The chain runs to 261 residues: Cytochrome c oxidase subunit 3 (261 aa).

Residues methionine 1–proline 15 lie on the Mitochondrial matrix side of the membrane. A helical membrane pass occupies residues tryptophan 16–tryptophan 34. Topologically, residues phenylalanine 35–threonine 40 are mitochondrial intermembrane. Residues methionine 41–threonine 66 traverse the membrane as a helical segment. Over tyrosine 67 to threonine 72 the chain is Mitochondrial matrix. Residues serine 73–serine 105 traverse the membrane as a helical segment. The Mitochondrial intermembrane segment spans residues leucine 106–glutamate 128. The chain crosses the membrane as a helical span at residues valine 129–methionine 152. Residues lysine 153–asparagine 155 are Mitochondrial matrix-facing. The chain crosses the membrane as a helical span at residues lysine 156–glutamate 183. At threonine 184–aspartate 190 the chain is on the mitochondrial intermembrane side. A helical transmembrane segment spans residues serine 191–alanine 223. The Mitochondrial matrix segment spans residues lysine 224–histidine 232. A helical membrane pass occupies residues phenylalanine 233–valine 256. The Mitochondrial intermembrane segment spans residues tyrosine 257 to serine 261.

This sequence belongs to the cytochrome c oxidase subunit 3 family. Component of the cytochrome c oxidase (complex IV, CIV), a multisubunit enzyme composed of 14 subunits. The complex is composed of a catalytic core of 3 subunits MT-CO1, MT-CO2 and MT-CO3, encoded in the mitochondrial DNA, and 11 supernumerary subunits COX4I, COX5A, COX5B, COX6A, COX6B, COX6C, COX7A, COX7B, COX7C, COX8 and NDUFA4, which are encoded in the nuclear genome. The complex exists as a monomer or a dimer and forms supercomplexes (SCs) in the inner mitochondrial membrane with NADH-ubiquinone oxidoreductase (complex I, CI) and ubiquinol-cytochrome c oxidoreductase (cytochrome b-c1 complex, complex III, CIII), resulting in different assemblies (supercomplex SCI(1)III(2)IV(1) and megacomplex MCI(2)III(2)IV(2)).

It localises to the mitochondrion inner membrane. The enzyme catalyses 4 Fe(II)-[cytochrome c] + O2 + 8 H(+)(in) = 4 Fe(III)-[cytochrome c] + 2 H2O + 4 H(+)(out). Its function is as follows. Component of the cytochrome c oxidase, the last enzyme in the mitochondrial electron transport chain which drives oxidative phosphorylation. The respiratory chain contains 3 multisubunit complexes succinate dehydrogenase (complex II, CII), ubiquinol-cytochrome c oxidoreductase (cytochrome b-c1 complex, complex III, CIII) and cytochrome c oxidase (complex IV, CIV), that cooperate to transfer electrons derived from NADH and succinate to molecular oxygen, creating an electrochemical gradient over the inner membrane that drives transmembrane transport and the ATP synthase. Cytochrome c oxidase is the component of the respiratory chain that catalyzes the reduction of oxygen to water. Electrons originating from reduced cytochrome c in the intermembrane space (IMS) are transferred via the dinuclear copper A center (CU(A)) of subunit 2 and heme A of subunit 1 to the active site in subunit 1, a binuclear center (BNC) formed by heme A3 and copper B (CU(B)). The BNC reduces molecular oxygen to 2 water molecules using 4 electrons from cytochrome c in the IMS and 4 protons from the mitochondrial matrix. This is Cytochrome c oxidase subunit 3 (MT-CO3) from Lycodon semicarinatus (Ryukyu odd-tooth snake).